A 214-amino-acid polypeptide reads, in one-letter code: Putative F-box protein At5g15670 (214 aa).

Positions 22–68 (RNKFDEIPHDLVIEILGRLPAKSVARFLTVSKLWATSIRSLDFIKSY) constitute an F-box domain.

The sequence is that of Putative F-box protein At5g15670 from Arabidopsis thaliana (Mouse-ear cress).